Here is an 862-residue protein sequence, read N- to C-terminus: Valine--tRNA ligase (862 aa).

The 'HIGH' region motif lies at 43–53; the sequence is PTVSGALHVGH. Residues 459-494 are disordered; the sequence is ERPILPDDAALPVDPSSDTPTGYHDSQRHQPGGFMA. Positions 574-578 match the 'KMSKS' region motif; sequence KMSKS. Residue lysine 577 coordinates ATP.

This sequence belongs to the class-I aminoacyl-tRNA synthetase family. ValS type 2 subfamily. Monomer.

It is found in the cytoplasm. The enzyme catalyses tRNA(Val) + L-valine + ATP = L-valyl-tRNA(Val) + AMP + diphosphate. Catalyzes the attachment of valine to tRNA(Val). As ValRS can inadvertently accommodate and process structurally similar amino acids such as threonine, to avoid such errors, it has a 'posttransfer' editing activity that hydrolyzes mischarged Thr-tRNA(Val) in a tRNA-dependent manner. This chain is Valine--tRNA ligase, found in Salinispora arenicola (strain CNS-205).